A 177-amino-acid polypeptide reads, in one-letter code: Large ribosomal subunit protein uL6 (177 aa).

Belongs to the universal ribosomal protein uL6 family. As to quaternary structure, part of the 50S ribosomal subunit.

This protein binds to the 23S rRNA, and is important in its secondary structure. It is located near the subunit interface in the base of the L7/L12 stalk, and near the tRNA binding site of the peptidyltransferase center. This chain is Large ribosomal subunit protein uL6, found in Saccharophagus degradans (strain 2-40 / ATCC 43961 / DSM 17024).